The following is a 224-amino-acid chain: Claudin-17 (224 aa).

Topologically, residues Met1–Gln7 are cytoplasmic. A helical transmembrane segment spans residues Ile8 to Pro28. Residues Gln29–Arg81 lie on the Extracellular side of the membrane. A helical membrane pass occupies residues Ala82–Met102. Topologically, residues Lys103–Val124 are cytoplasmic. Residues Leu125–Ile145 form a helical membrane-spanning segment. Residues Arg146 to Ala164 are Extracellular-facing. Residues Leu165–Tyr185 traverse the membrane as a helical segment. Over Cys186–Val224 the chain is Cytoplasmic.

Belongs to the claudin family. Does not form homotypic polymeric strands and it is not sufficient to form tight junctions by its own. Interacts with OCLN. Expressed at high levels in the kidney and at mucher lower levels in the brain. In the kidney, expression gradually decreases from the proximal tubule downstream to the distal convoluted tubule. Expressed in the thin ascending limb of Henle's loop, as well as in the thick ascending limb of Henle's loop. In the distal convoluted tubules, expressed only in a few tubules. Not detected in the collecting duct. In the brain, expressed in blood vessels (at protein level).

The protein localises to the cell junction. The protein resides in the tight junction. Its subcellular location is the cell membrane. The enzyme catalyses chloride(in) = chloride(out). The catalysed reaction is hydrogencarbonate(in) = hydrogencarbonate(out). It catalyses the reaction bromide(in) = bromide(out). It carries out the reaction iodide(out) = iodide(in). The enzyme catalyses fluoride(in) = fluoride(out). The catalysed reaction is nitrate(in) = nitrate(out). It catalyses the reaction thiocyanate(in) = thiocyanate(out). Its function is as follows. Channel-forming tight junction protein with selectivity for anions, including chloride and hydrogencarbonate, and for solutes smaller than 9 Angstrom in diameter. In the kidney proximal tubule, may be involved in quantitative reabsorption of filtered anions. Does not affect water permeability. The chain is Claudin-17 (Cldn17) from Mus musculus (Mouse).